The following is a 246-amino-acid chain: Proteasome subunit alpha (246 aa).

Belongs to the peptidase T1A family. The 20S proteasome core is composed of 14 alpha and 14 beta subunits that assemble into four stacked heptameric rings, resulting in a barrel-shaped structure. The two inner rings, each composed of seven catalytic beta subunits, are sandwiched by two outer rings, each composed of seven alpha subunits. The catalytic chamber with the active sites is on the inside of the barrel. Has probably a gated structure, the ends of the cylinder being occluded by the N-termini of the alpha-subunits. Is likely capped at one or both ends by the proteasome regulatory ATPase, PAN.

It localises to the cytoplasm. Its activity is regulated as follows. The formation of the proteasomal ATPase PAN-20S proteasome complex, via the docking of the C-termini of PAN into the intersubunit pockets in the alpha-rings, triggers opening of the gate for substrate entry. Interconversion between the open-gate and close-gate conformations leads to a dynamic regulation of the 20S proteasome proteolysis activity. Component of the proteasome core, a large protease complex with broad specificity involved in protein degradation. The chain is Proteasome subunit alpha from Archaeoglobus fulgidus (strain ATCC 49558 / DSM 4304 / JCM 9628 / NBRC 100126 / VC-16).